Consider the following 955-residue polypeptide: E3 ubiquitin-protein ligase MIB2 (955 aa).

At methionine 1 the chain carries N-acetylmethionine. Residues 1-80 enclose the MIB/HERC2 1 domain; it reads MDPDPQAGVQ…AHDLLLYDNA (80 aa). The segment at 86–138 adopts a ZZ-type zinc-finger fold; it reads HPNIICDCCKKHGLRGMRWKCRVCLDYDLCTQCYMHNKHELAHAFDRYETAHS. Zn(2+) contacts are provided by cysteine 91, cysteine 94, cysteine 106, cysteine 109, cysteine 115, cysteine 118, histidine 124, and histidine 128. In terms of domain architecture, MIB/HERC2 2 spans 149 to 227; sequence LPRIPLRGIF…KVDLKCVGEA (79 aa). Serine 251 carries the post-translational modification Phosphoserine. ANK repeat units lie at residues 464 to 493, 497 to 526, 530 to 559, 563 to 595, 599 to 628, 633 to 663, 667 to 696, 700 to 728, and 769 to 798; these read QGRT…GVDL, EGNT…RADA, TQST…DVNL, HSDT…DVTA, QGFT…QLVD, DGFT…DVNV, KLQS…SVNA, EGDT…DPGP, and RGRS…ERQA. 2 RING-type zinc fingers span residues 832 to 867 and 911 to 944; these read CLVC…IRCQ and CPIC…PICR.

In terms of assembly, interacts with actin monomer. Post-translationally, ubiquitinated. Possibly via autoubiquitination. In terms of tissue distribution, expressed in skeletal muscle, and to a lesser extent in heart, brain and kidney.

The protein resides in the cytoplasm. It is found in the endosome. The enzyme catalyses S-ubiquitinyl-[E2 ubiquitin-conjugating enzyme]-L-cysteine + [acceptor protein]-L-lysine = [E2 ubiquitin-conjugating enzyme]-L-cysteine + N(6)-ubiquitinyl-[acceptor protein]-L-lysine.. It functions in the pathway protein modification; protein ubiquitination. In terms of biological role, E3 ubiquitin-protein ligase that mediates ubiquitination of Delta receptors, which act as ligands of Notch proteins. Positively regulates the Delta-mediated Notch signaling by ubiquitinating the intracellular domain of Delta, leading to endocytosis of Delta receptors. The protein is E3 ubiquitin-protein ligase MIB2 of Homo sapiens (Human).